The following is a 49-amino-acid chain: Large ribosomal subunit protein bL33B (49 aa).

It belongs to the bacterial ribosomal protein bL33 family.

The sequence is that of Large ribosomal subunit protein bL33B from Bacillus anthracis.